Here is a 1128-residue protein sequence, read N- to C-terminus: Major DNA-binding protein (1128 aa).

The tract at residues 1104 to 1128 is required for nuclear localization; that stretch reads LGGGGQGSGGRRKRRLATVLPGLEV.

Belongs to the herpesviridae major DNA-binding protein family. Homooligomers. Forms double-helical filaments necessary for the formation of replication compartments within the host nucleus. Interacts with the origin-binding protein. Interacts with the helicase primase complex; this interaction stimulates primer synthesis activity of the helicase-primase complex. Interacts with the DNA polymerase. Interacts with the alkaline exonuclease; this interaction increases its nuclease processivity.

The protein localises to the virion tegument. Its subcellular location is the host nucleus. Functionally, plays several crucial roles in viral infection. Participates in the opening of the viral DNA origin to initiate replication by interacting with the origin-binding protein. May disrupt loops, hairpins and other secondary structures present on ssDNA to reduce and eliminate pausing of viral DNA polymerase at specific sites during elongation. Promotes viral DNA recombination by performing strand-transfer, characterized by the ability to transfer a DNA strand from a linear duplex to a complementary single-stranded DNA circle. Can also catalyze the renaturation of complementary single strands. Additionally, reorganizes the host cell nucleus, leading to the formation of prereplicative sites and replication compartments. This process is driven by the protein which can form double-helical filaments in the absence of DNA. This chain is Major DNA-binding protein, found in Homo sapiens (Human).